A 412-amino-acid polypeptide reads, in one-letter code: Subtilisin-like protease 6 (412 aa).

The N-terminal stretch at 1–20 (MGFITKAIPIVLAALSTVNG) is a signal peptide. The propeptide occupies 21–127 (ARILEAGPHA…VRATTNGTNL (107 aa)). Residues 36–120 (KYIVVMKKDV…FIEPDFVVRA (85 aa)) enclose the Inhibitor I9 domain. A Peptidase S8 domain is found at 135-412 (SWGLARVSTR…SKLIYNGSGK (278 aa)). Active-site charge relay system residues include D167 and H198. Residues N252, N264, and N325 are each glycosylated (N-linked (GlcNAc...) asparagine). S358 serves as the catalytic Charge relay system. The N-linked (GlcNAc...) asparagine glycan is linked to N408.

This sequence belongs to the peptidase S8 family.

It is found in the secreted. Its function is as follows. Secreted subtilisin-like serine protease with keratinolytic activity that contributes to pathogenicity. This chain is Subtilisin-like protease 6 (SUB6), found in Trichophyton verrucosum (strain HKI 0517).